The primary structure comprises 246 residues: DNA polymerase sliding clamp (246 aa).

The protein belongs to the PCNA family. In terms of assembly, homotrimer. The subunits circularize to form a toroid; DNA passes through its center. Replication factor C (RFC) is required to load the toroid on the DNA.

Sliding clamp subunit that acts as a moving platform for DNA processing. Responsible for tethering the catalytic subunit of DNA polymerase and other proteins to DNA during high-speed replication. This chain is DNA polymerase sliding clamp, found in Thermoplasma acidophilum (strain ATCC 25905 / DSM 1728 / JCM 9062 / NBRC 15155 / AMRC-C165).